The sequence spans 189 residues: MRKIGIFGGTFDPPHNGHLLMANEVLYKLDLDEIWFMPNQIPPHKQKNSFSLSMHRVEMLKLAISGKEQFKLETIELEREGPSYTFDTVRLLKDRYPDHEFYFIIGADMVEYLPKWSNIDKLVNMIQFVGVKRPGFQIETPYPLVFVDVPIFEVSSSLLRDRIKNRQPTDYLIPDEVKVYVKENRLYET.

It belongs to the NadD family.

The enzyme catalyses nicotinate beta-D-ribonucleotide + ATP + H(+) = deamido-NAD(+) + diphosphate. It functions in the pathway cofactor biosynthesis; NAD(+) biosynthesis; deamido-NAD(+) from nicotinate D-ribonucleotide: step 1/1. Its function is as follows. Catalyzes the reversible adenylation of nicotinate mononucleotide (NaMN) to nicotinic acid adenine dinucleotide (NaAD). The protein is Probable nicotinate-nucleotide adenylyltransferase of Bacillus licheniformis (strain ATCC 14580 / DSM 13 / JCM 2505 / CCUG 7422 / NBRC 12200 / NCIMB 9375 / NCTC 10341 / NRRL NRS-1264 / Gibson 46).